The sequence spans 795 residues: Phenylalanine--tRNA ligase beta subunit (795 aa).

A tRNA-binding domain is found at 39–148 (AGSFHGVVVG…ADAPIGTDIR (110 aa)). The region spanning 401–476 (PKRATITLRR…RVYGYNNIPD (76 aa)) is the B5 domain. Residues Asp-454, Asp-460, Glu-463, and Glu-464 each coordinate Mg(2+). The FDX-ACB domain occupies 701-794 (SRFPANRRDI…LKERFQASLR (94 aa)).

Belongs to the phenylalanyl-tRNA synthetase beta subunit family. Type 1 subfamily. Tetramer of two alpha and two beta subunits. Requires Mg(2+) as cofactor.

The protein localises to the cytoplasm. It catalyses the reaction tRNA(Phe) + L-phenylalanine + ATP = L-phenylalanyl-tRNA(Phe) + AMP + diphosphate + H(+). In Escherichia coli (strain K12), this protein is Phenylalanine--tRNA ligase beta subunit (pheT).